The sequence spans 1033 residues: Translation initiation factor IF-2 (1033 aa).

The segment at 49–432 (AFQQGGGNGR…APSVGGVMLP (384 aa)) is disordered. The segment covering 59–113 (SAGRPAAPKKAAPRPSAPSPAQAGPSQAAPAAGDRAAAPRPSAAPKAPAAQQPAA) has biased composition (low complexity). Pro residues-rich tracts occupy residues 114 to 140 (PSAP…PAPA) and 148 to 164 (PAAP…PSGP). A compositionally biased stretch (low complexity) spans 171-189 (PGAPKPGGARPSGPGQDRG). The span at 190–201 (QQGGQGRPGGQR) shows a compositional bias: gly residues. Pro residues predominate over residues 236–246 (APRPQGGPRPG). The span at 247–268 (GPGGAPGGGPRPQGPGGQGGGP) shows a compositional bias: gly residues. A compositionally biased stretch (low complexity) spans 305-314 (MMPQRPAAGP). The segment covering 318–401 (PGGGGRGPGG…GTQGAFGRPG (84 aa)) has biased composition (gly residues). Residues 405-414 (RRGRKSKRQR) show a composition bias toward basic residues. Residues 526–698 (VRPPVVTVMG…VVLTADASLD (173 aa)) form the tr-type G domain. Residues 535–542 (GHVDHGKT) are G1. 535–542 (GHVDHGKT) serves as a coordination point for GTP. The segment at 560–564 (GITQH) is G2. The segment at 585–588 (DTPG) is G3. Residues 585–589 (DTPGH) and 639–642 (NKID) contribute to the GTP site. Residues 639-642 (NKID) are G4. The tract at residues 675 to 677 (SAK) is G5.

Belongs to the TRAFAC class translation factor GTPase superfamily. Classic translation factor GTPase family. IF-2 subfamily.

It localises to the cytoplasm. Its function is as follows. One of the essential components for the initiation of protein synthesis. Protects formylmethionyl-tRNA from spontaneous hydrolysis and promotes its binding to the 30S ribosomal subunits. Also involved in the hydrolysis of GTP during the formation of the 70S ribosomal complex. The sequence is that of Translation initiation factor IF-2 from Streptomyces coelicolor (strain ATCC BAA-471 / A3(2) / M145).